A 256-amino-acid polypeptide reads, in one-letter code: Isoprenyl transferase (256 aa).

Residue D33 is part of the active site. D33 provides a ligand contact to Mg(2+). Substrate contacts are provided by residues 34–37 (GNGR), W38, R46, H50, and 78–80 (STE). N81 acts as the Proton acceptor in catalysis. Substrate is bound by residues W82, R84, R201, and 207 to 209 (RIS). Residue E220 participates in Mg(2+) binding.

This sequence belongs to the UPP synthase family. As to quaternary structure, homodimer. Requires Mg(2+) as cofactor.

Catalyzes the condensation of isopentenyl diphosphate (IPP) with allylic pyrophosphates generating different type of terpenoids. The polypeptide is Isoprenyl transferase (Staphylococcus epidermidis (strain ATCC 35984 / DSM 28319 / BCRC 17069 / CCUG 31568 / BM 3577 / RP62A)).